The sequence spans 122 residues: Large ribosomal subunit protein bL12 (122 aa).

This sequence belongs to the bacterial ribosomal protein bL12 family. As to quaternary structure, homodimer. Part of the ribosomal stalk of the 50S ribosomal subunit. Forms a multimeric L10(L12)X complex, where L10 forms an elongated spine to which 2 to 4 L12 dimers bind in a sequential fashion. Binds GTP-bound translation factors.

Functionally, forms part of the ribosomal stalk which helps the ribosome interact with GTP-bound translation factors. Is thus essential for accurate translation. The chain is Large ribosomal subunit protein bL12 from Mesoplasma florum (strain ATCC 33453 / NBRC 100688 / NCTC 11704 / L1) (Acholeplasma florum).